The sequence spans 119 residues: Ribosome-binding factor A (119 aa).

It belongs to the RbfA family. As to quaternary structure, monomer. Binds 30S ribosomal subunits, but not 50S ribosomal subunits or 70S ribosomes.

It localises to the cytoplasm. Its function is as follows. One of several proteins that assist in the late maturation steps of the functional core of the 30S ribosomal subunit. Associates with free 30S ribosomal subunits (but not with 30S subunits that are part of 70S ribosomes or polysomes). Required for efficient processing of 16S rRNA. May interact with the 5'-terminal helix region of 16S rRNA. In Ligilactobacillus salivarius (strain UCC118) (Lactobacillus salivarius), this protein is Ribosome-binding factor A.